Consider the following 115-residue polypeptide: Allergen Tha p 2 (115 aa).

A signal peptide spans 1-15 (MKLLIFAILIALSSS).

The polypeptide is Allergen Tha p 2 (Thaumetopoea pityocampa (Pine processionary moth)).